We begin with the raw amino-acid sequence, 754 residues long: 1,4-alpha-glucan branching enzyme GlgB (754 aa).

Catalysis depends on D431, which acts as the Nucleophile. E484 serves as the catalytic Proton donor.

This sequence belongs to the glycosyl hydrolase 13 family. GlgB subfamily. As to quaternary structure, monomer.

It catalyses the reaction Transfers a segment of a (1-&gt;4)-alpha-D-glucan chain to a primary hydroxy group in a similar glucan chain.. It functions in the pathway glycan biosynthesis; glycogen biosynthesis. In terms of biological role, catalyzes the formation of the alpha-1,6-glucosidic linkages in glycogen by scission of a 1,4-alpha-linked oligosaccharide from growing alpha-1,4-glucan chains and the subsequent attachment of the oligosaccharide to the alpha-1,6 position. The protein is 1,4-alpha-glucan branching enzyme GlgB of Prochlorococcus marinus (strain MIT 9515).